The chain runs to 218 residues: MTVALGFRDLGLIDYETAWHAMQRFTDGRGREAADEVWLVQHPPVFTQGQSGKAEHLLLPGNIPVVQVDRGGQVTYHGPGQLVAYLMLDVRRLGFGVRDLVTRIENTLIALLADYGVKAAAKADAPGVYVDGAKIASLGLRIRNGCSFHGLALNVDMDLEPFRRINPCGYAGLAMTQLSDQAGQIEFSEVSARLRAQLVKHLDYAEQATLTGGINHYD.

Residues 31 to 206 (REAADEVWLV…QLVKHLDYAE (176 aa)) enclose the BPL/LPL catalytic domain. Substrate contacts are provided by residues 70-77 (RGGQVTYH), 137-139 (SLG), and 150-152 (GLA). Residue C168 is the Acyl-thioester intermediate of the active site.

This sequence belongs to the LipB family.

The protein localises to the cytoplasm. It carries out the reaction octanoyl-[ACP] + L-lysyl-[protein] = N(6)-octanoyl-L-lysyl-[protein] + holo-[ACP] + H(+). Its pathway is protein modification; protein lipoylation via endogenous pathway; protein N(6)-(lipoyl)lysine from octanoyl-[acyl-carrier-protein]: step 1/2. Catalyzes the transfer of endogenously produced octanoic acid from octanoyl-acyl-carrier-protein onto the lipoyl domains of lipoate-dependent enzymes. Lipoyl-ACP can also act as a substrate although octanoyl-ACP is likely to be the physiological substrate. This is Octanoyltransferase from Pseudomonas savastanoi pv. phaseolicola (strain 1448A / Race 6) (Pseudomonas syringae pv. phaseolicola (strain 1448A / Race 6)).